We begin with the raw amino-acid sequence, 1354 residues long: Enhancer of mRNA-decapping protein 4 homolog (1354 aa).

The tract at residues 18–38 (PLSASSSPPPSVHRSPRCGKA) is disordered. Phosphoserine is present on Ser32. 2 WD repeats span residues 309-348 (EEDS…VRNH) and 363-406 (CSLF…CLQT). Positions 552-581 (ERSSLNSKRSQTPEDNLLIKEEPESPNSGT) are disordered. Polar residues predominate over residues 554 to 565 (SSLNSKRSQTPE). Ser561 carries the phosphoserine modification. Thr563 carries the post-translational modification Phosphothreonine. At Ser576 the chain carries Phosphoserine. Thr581 is subject to Phosphothreonine. Ser759, Ser762, and Ser763 each carry phosphoserine. Residues 765 to 803 (SREVQEIMATQDDADAYEAELENLDDDDDDEEEELANSS) are a coiled coil. Residues 788–799 (LDDDDDDEEEEL) show a composition bias toward acidic residues. 2 disordered regions span residues 788-811 (LDDD…AVDG) and 838-884 (NTNN…AGGT). Residues 853–884 (NNNTSVGSNSNNNTATTLSTSNTSSSNNAGGT) are compositionally biased toward low complexity. Coiled-coil stretches lie at residues 893-936 (ELNA…HSKQ), 969-1036 (NEHK…QAQM), and 1159-1188 (KHRT…QVQE). Ser1207 bears the Phosphoserine mark. Residues Thr1211 and Thr1317 each carry the phosphothreonine modification. Tyr1320 is subject to Phosphotyrosine.

The protein belongs to the WD repeat EDC4 family. Homodimer. Interacts with Dcp1 and Dcp2. Interacts with Gyf.

It is found in the cytoplasm. The protein resides in the P-body. In terms of biological role, in the process of mRNA degradation, seems to play a role in mRNA decapping. Required for silencing a subset of endogenous miRNA targets. This chain is Enhancer of mRNA-decapping protein 4 homolog (Ge-1), found in Drosophila melanogaster (Fruit fly).